A 424-amino-acid chain; its full sequence is ATP-sensitive inward rectifier potassium channel 8 (424 aa).

Topologically, residues 1 to 69 (MLARKSIIPE…IFTTLVDLKW (69 aa)) are cytoplasmic. Ser6 is modified (phosphoserine). A helical transmembrane segment spans residues 70-94 (RHTLVIFTMSFLCSWLLFAIMWWLV). The Extracellular segment spans residues 95–126 (AFAHGDIYAYMEKGITEKSGLESAVCVTNVRS). An intramembrane region (helical; Pore-forming) is located at residues 127–138 (FTSAFLFSIEVQ). Positions 139-145 (VTIGFGG) form an intramembrane region, pore-forming. Residues 140–145 (TIGFGG) carry the Selectivity filter motif. Topologically, residues 146–154 (RMMTEECPL) are extracellular. Residues 155-176 (AITVLILQNIVGLIINAVMLGC) traverse the membrane as a helical segment. The Cytoplasmic portion of the chain corresponds to 177 to 424 (IFMKTAQAHR…PEGNQCPSES (248 aa)). Residues 374 to 424 (LSHQNSLRKRNSMRRNNSMRRSNSIRRNNSSLMVPKVQFMTPEGNQCPSES) form a disordered region. A compositionally biased stretch (low complexity) spans 387–404 (RRNNSMRRSNSIRRNNSS).

Belongs to the inward rectifier-type potassium channel (TC 1.A.2.1) family. KCNJ8 subfamily. In terms of assembly, interacts with ABCC9. As to expression, widely expressed, including in pancreatic islets, pituitary, skeletal muscle and heart.

The protein resides in the membrane. It catalyses the reaction K(+)(in) = K(+)(out). Functionally, inward rectifier potassium channels are characterized by a greater tendency to allow potassium to flow into the cell rather than out of it. Their voltage dependence is regulated by the concentration of extracellular potassium; as external potassium is raised, the voltage range of the channel opening shifts to more positive voltages. The inward rectification is mainly due to the blockage of outward current by internal magnesium. This channel is activated by internal ATP and can be blocked by external barium. Can form a sulfonyllurea-sensitive but ATP-insensitive potassium channel with ABCC9. The chain is ATP-sensitive inward rectifier potassium channel 8 (Kcnj8) from Rattus norvegicus (Rat).